A 983-amino-acid chain; its full sequence is UPF0182 protein KRH_08700 (983 aa).

Transmembrane regions (helical) follow at residues 22-42, 67-87, 116-136, 172-192, 213-233, 261-281, and 288-308; these read GALL…VGFT, VIGL…LSLW, VVMV…VATQ, LLIG…LLMH, VHLG…FWLD, GILA…GFIG, and IGAA…PWAI. The segment at 893-959 is disordered; it reads GAKTDTGAGV…DKAMKDGDWT (67 aa). The span at 947 to 959 shows a compositional bias: basic and acidic residues; the sequence is QDSDKAMKDGDWT.

The protein belongs to the UPF0182 family.

Its subcellular location is the cell membrane. This Kocuria rhizophila (strain ATCC 9341 / DSM 348 / NBRC 103217 / DC2201) protein is UPF0182 protein KRH_08700.